The chain runs to 810 residues: F-BAR domain only protein 2 (810 aa).

One can recognise an F-BAR domain in the interval 3–250 (MAYFVENFWG…NMANTTVESL (248 aa)). Residues 3–274 (MAYFVENFWG…PGLIEFEECD (272 aa)) are mediates dimerization and binding to membranes enriched in Pi(4,5)-P2 and induces their tubulation. A coiled-coil region spans residues 87–156 (HLDLVRKLQE…CVEQERLKKE (70 aa)). Residue lysine 297 forms a Glycyl lysine isopeptide (Lys-Gly) (interchain with G-Cter in SUMO2) linkage. Positions 301–352 (DAESVECPDADSLNIPDVDEEGYSIKPETNQNDTKENHFYSSSDSDSEDEEP) are disordered. Phosphoserine is present on serine 312. Position 385 is a phosphothreonine (threonine 385). 3 positions are modified to phosphoserine: serine 387, serine 394, and serine 403. The segment at 403–537 (SNEELTKSKP…VSRGPSPVSL (135 aa)) is disordered. Residues 433–456 (PSLDSSSSSSLTSSSSARPTTPLS) are compositionally biased toward low complexity. Serine 488, serine 493, serine 496, serine 508, serine 510, serine 511, and serine 533 each carry phosphoserine. Over residues 502–521 (PLARAESSSSISSSASLSAA) the composition is skewed to low complexity. The segment at 521–810 (ANTPTVGVSR…FATGRYLADC (290 aa)) is mediates interaction with DAB2, EPS15, EPS15R and ITSN1. One can recognise an MHD domain in the interval 542-809 (TLPVAVALTE…RFATGRYLAD (268 aa)).

The protein belongs to the FCHO family. Homodimer; disulfide-linked. May form homotetramer. Interacts with AP2A1. Interacts with EPS15, EPS15R, ITSN1 and ITSN2; recruit those scaffolding proteins which in turn may interact with the adaptor protein complex AP-2 at the plasma membrane. Interacts with DAB2 (via DPF motifs); mediates LDL receptor/LDLR endocytosis. Ubiquitinated. Mainly undergoes monoubiquitination but also polyubiquitination.

It localises to the membrane. Its subcellular location is the clathrin-coated pit. Its function is as follows. Functions in an early step of clathrin-mediated endocytosis. Has both a membrane binding/bending activity and the ability to recruit proteins essential to the formation of functional clathrin-coated pits. Has a lipid-binding activity with a preference for membranes enriched in phosphatidylserine and phosphoinositides (Pi(4,5) biphosphate) like the plasma membrane. Its membrane-bending activity might be important for the subsequent action of clathrin and adaptors in the formation of clathrin-coated vesicles. Involved in adaptor protein complex AP-2-dependent endocytosis of the transferrin receptor, it also functions in the AP-2-independent endocytosis of the LDL receptor. The polypeptide is F-BAR domain only protein 2 (FCHO2) (Pongo abelii (Sumatran orangutan)).